Reading from the N-terminus, the 159-residue chain is Alpha-lactalbumin (159 aa).

A signal peptide spans 1 to 19 (MMRFVPLFLACISLPAFQA). Residues 20–142 (TEFTKCEVSH…KLEQWRCEKP (123 aa)) enclose the C-type lysozyme domain. Disulfide bonds link Cys25–Cys139, Cys47–Cys130, Cys80–Cys96, and Cys92–Cys110. Residue Asn64 is glycosylated (N-linked (GlcNAc...) asparagine). Positions 98, 101, 106, and 107 each coordinate Ca(2+).

The protein belongs to the glycosyl hydrolase 22 family. Lactose synthase (LS) is a heterodimer of a catalytic component, beta1,4-galactosyltransferase (beta4Gal-T1) and a regulatory component, alpha-lactalbumin (LA). As to expression, mammary gland specific. Secreted in milk.

It is found in the secreted. Regulatory subunit of lactose synthase, changes the substrate specificity of galactosyltransferase in the mammary gland making glucose a good acceptor substrate for this enzyme. This enables LS to synthesize lactose, the major carbohydrate component of milk. In other tissues, galactosyltransferase transfers galactose onto the N-acetylglucosamine of the oligosaccharide chains in glycoproteins. The polypeptide is Alpha-lactalbumin (Lalba) (Rattus norvegicus (Rat)).